The following is a 200-amino-acid chain: GTP cyclohydrolase-2 (200 aa).

Residue Arg50–Glu54 coordinates GTP. The Zn(2+) site is built by Cys55, Cys66, and Cys68. Residues Gln71, Glu93–Arg95, and Thr115 each bind GTP. Asp127 serves as the catalytic Proton acceptor. Arg129 serves as the catalytic Nucleophile. GTP-binding residues include Thr150 and Lys155.

Belongs to the GTP cyclohydrolase II family. It depends on Zn(2+) as a cofactor.

The catalysed reaction is GTP + 4 H2O = 2,5-diamino-6-hydroxy-4-(5-phosphoribosylamino)-pyrimidine + formate + 2 phosphate + 3 H(+). It functions in the pathway cofactor biosynthesis; riboflavin biosynthesis; 5-amino-6-(D-ribitylamino)uracil from GTP: step 1/4. Functionally, catalyzes the conversion of GTP to 2,5-diamino-6-ribosylamino-4(3H)-pyrimidinone 5'-phosphate (DARP), formate and pyrophosphate. The polypeptide is GTP cyclohydrolase-2 (Acinetobacter baumannii (strain AB0057)).